Here is a 507-residue protein sequence, read N- to C-terminus: Ribonuclease Y (507 aa).

Residues 1-21 (MLWYIVAGAGGLLIGYLIASY) form a helical membrane-spanning segment. Residues 197–282 (TVSTVSLPSD…EMYEKAKQEV (86 aa)) enclose the KH domain. The region spanning 323 to 416 (VLNHSIEVAL…VAAADALSAA (94 aa)) is the HD domain.

Belongs to the RNase Y family.

The protein resides in the cell membrane. Functionally, endoribonuclease that initiates mRNA decay. The polypeptide is Ribonuclease Y (Thermotoga petrophila (strain ATCC BAA-488 / DSM 13995 / JCM 10881 / RKU-1)).